The following is a 609-amino-acid chain: Leukotriene A-4 hydrolase (609 aa).

A peptide-binding positions include 131–133 (QCQ) and 263–268 (PYGGME). His292 lines the Zn(2+) pocket. Catalysis depends on Glu293, which acts as the Proton acceptor. Zn(2+) contacts are provided by His296 and Glu315. The Proton donor role is filled by Tyr380. 560–562 (RMK) lines the a peptide pocket.

This sequence belongs to the peptidase M1 family. As to quaternary structure, homodimer. Zn(2+) is required as a cofactor. As to expression, expressed in oocytes.

The protein localises to the cytoplasm. The catalysed reaction is Release of the N-terminal residue from a tripeptide.. It catalyses the reaction leukotriene A4 + H2O = leukotriene B4. It participates in lipid metabolism; leukotriene B4 biosynthesis. The epoxide hydrolase activity is mildly restrained by suicide inactivation, possibly involving binding of LTA4 to Tyr-380. Its function is as follows. Bifunctional zinc metalloenzyme that comprises both epoxide hydrolase (EH) and aminopeptidase activities. Acts as an epoxide hydrolase to catalyze the conversion of leukotriene A4 (LTA4) to the pro-inflammatory mediator leukotriene B4 (LTB4). During the conversion of LTA4 to LTB4, a second product is formed, the isomeric delta6-trans-delta8-cis-LTB4 (5S,12R-dihydroxy-6,10-trans-8,14-cis-eicosatetraenoic acid), with a relative formation of 10% delta6-trans-delta8-cis-LTB4 compared to 90% LTB4. The production of delta6-trans-delta8-cis-LTB4 seems to depend on the phenylalanine residue at position 375. Also has aminopeptidase activity. This Xenopus laevis (African clawed frog) protein is Leukotriene A-4 hydrolase.